Consider the following 271-residue polypeptide: Ribose-phosphate pyrophosphokinase 2 (271 aa).

Residues 34-36 (DGE) and 82-83 (RQ) contribute to the ATP site. Residues H115 and D150 each contribute to the Mg(2+) site. The active site involves K173. Residues R175, D199, and 203–207 (STGGT) each bind D-ribose 5-phosphate.

It belongs to the ribose-phosphate pyrophosphokinase family. Class III (archaeal) subfamily. Mg(2+) serves as cofactor.

The protein localises to the cytoplasm. The catalysed reaction is D-ribose 5-phosphate + ATP = 5-phospho-alpha-D-ribose 1-diphosphate + AMP + H(+). The protein operates within metabolic intermediate biosynthesis; 5-phospho-alpha-D-ribose 1-diphosphate biosynthesis; 5-phospho-alpha-D-ribose 1-diphosphate from D-ribose 5-phosphate (route I): step 1/1. Involved in the biosynthesis of the central metabolite phospho-alpha-D-ribosyl-1-pyrophosphate (PRPP) via the transfer of pyrophosphoryl group from ATP to 1-hydroxyl of ribose-5-phosphate (Rib-5-P). This is Ribose-phosphate pyrophosphokinase 2 from Archaeoglobus fulgidus (strain ATCC 49558 / DSM 4304 / JCM 9628 / NBRC 100126 / VC-16).